The chain runs to 422 residues: Transcription initiation factor TFIID subunit 15b (422 aa).

4 disordered regions span residues 1–24 (MAGMYNQDGGGGAPIPSYGGDGYG), 47–94 (YGGR…PNPS), 111–263 (ALAP…DAAT), and 368–422 (MAEK…SRPY). Composition is skewed to gly residues over residues 8–24 (DGGGGAPIPSYGGDGYG) and 47–83 (YGGRGGYGGGGGRGNRGGGGGGYQGGDRGGRGSGGGG). Residues 84–115 (RDGDWRCPNPSCGNVNFARRVECNKCGALAPS) form a RanBP2-type zinc finger. The span at 123–133 (DRGGGGYSRGG) shows a compositional bias: gly residues. The segment covering 134-156 (GDSDRGGGRGGRNDSGRSYESSR) has biased composition (basic and acidic residues). 2 stretches are compositionally biased toward gly residues: residues 219–229 (PSYGGPRGGYG) and 236–247 (GGRGGRSGGYDG). The segment covering 252 to 263 (RRQEASYEDAAT) has biased composition (basic and acidic residues). The RRM domain occupies 280-371 (ARIYISNLPP…NKISVTMAEK (92 aa)). Residues 382-397 (RGGGRGGGGGGYGGGG) are compositionally biased toward gly residues.

It belongs to the TAF15 family. In terms of assembly, component of the TFIID complex. TFIID is composed of TATA binding protein (TBP) and a number of TBP-associated factors (TAFs) whose MWs range from 14-217 kDa. Interacts with TAF4, TAF4B, TAF5, TAF12B and TAF14. In terms of tissue distribution, expressed in roots, leaves and inflorescences.

The protein resides in the nucleus. In terms of biological role, TAFs are components of the transcription factor IID (TFIID) complex that is essential for mediating regulation of RNA polymerase transcription. This chain is Transcription initiation factor TFIID subunit 15b (TAF15B), found in Arabidopsis thaliana (Mouse-ear cress).